Reading from the N-terminus, the 77-residue chain is Dermatoxin-DA1 (77 aa).

A signal peptide spans 1–22; that stretch reads MAFLKKSLFLVLFLGLVPLFLC. A propeptide spanning residues 23-42 is cleaved from the precursor; the sequence is ENEKREGENEKEENDDQSEE. Position 76 is a lysine amide (K76).

This sequence belongs to the frog skin active peptide (FSAP) family. Dermatoxin subfamily. As to expression, expressed by the skin glands.

Its subcellular location is the secreted. In terms of biological role, possesses a potent antimicrobial activity against Gram-positive and Gram-negative bacteria. Probably acts by disturbing membrane functions with its amphipathic structure. The sequence is that of Dermatoxin-DA1 from Agalychnis dacnicolor (Giant Mexican leaf frog).